The following is a 209-amino-acid chain: Thymidine kinase (209 aa).

Residues 9-16 (AAMNAGKS) and 88-91 (DEAQ) contribute to the ATP site. Glu89 (proton acceptor) is an active-site residue. Positions 146, 148, 183, and 186 each coordinate Zn(2+).

This sequence belongs to the thymidine kinase family. In terms of assembly, homotetramer.

The protein resides in the cytoplasm. The catalysed reaction is thymidine + ATP = dTMP + ADP + H(+). This is Thymidine kinase from Legionella pneumophila (strain Lens).